The primary structure comprises 144 residues: 3-dehydroquinate dehydratase (144 aa).

Tyr22 serves as the catalytic Proton acceptor. The substrate site is built by Asn73, His79, and Asp86. Catalysis depends on His99, which acts as the Proton donor. Residues Leu100 to Ser101 and Arg110 each bind substrate.

This sequence belongs to the type-II 3-dehydroquinase family. In terms of assembly, homododecamer.

The enzyme catalyses 3-dehydroquinate = 3-dehydroshikimate + H2O. It functions in the pathway metabolic intermediate biosynthesis; chorismate biosynthesis; chorismate from D-erythrose 4-phosphate and phosphoenolpyruvate: step 3/7. Catalyzes a trans-dehydration via an enolate intermediate. The chain is 3-dehydroquinate dehydratase from Geotalea daltonii (strain DSM 22248 / JCM 15807 / FRC-32) (Geobacter daltonii).